The sequence spans 27 residues: Augerpeptide hhe6.2 (27 aa).

Intrachain disulfides connect Cys4–Cys13, Cys8–Cys20, and Cys12–Cys27.

Expressed by the venom duct.

It localises to the secreted. The sequence is that of Augerpeptide hhe6.2 from Hastula hectica (Sea snail).